A 215-amino-acid polypeptide reads, in one-letter code: LexA repressor (215 aa).

Positions 28–48 (RAEIAAELGFSSPNAAEEHLR) form a DNA-binding region, H-T-H motif. Active-site for autocatalytic cleavage activity residues include S133 and K170.

Belongs to the peptidase S24 family. Homodimer.

It catalyses the reaction Hydrolysis of Ala-|-Gly bond in repressor LexA.. Functionally, represses a number of genes involved in the response to DNA damage (SOS response), including recA and lexA. In the presence of single-stranded DNA, RecA interacts with LexA causing an autocatalytic cleavage which disrupts the DNA-binding part of LexA, leading to derepression of the SOS regulon and eventually DNA repair. This is LexA repressor from Burkholderia ambifaria (strain MC40-6).